Here is a 147-residue protein sequence, read N- to C-terminus: MMTQGPNLIGIHTNTKENEETQKFVNWFLNTSLTWDNNESKTPAQYFTESASYILPLKETFTGSNNKGQSGKNDGKNSNNTFKAKALELFKEQSENKIVGYSDPSDFRGGKFRESIGSAFNATVNSHVDFNTFVANFRANLGSGYDK.

It belongs to the MG185/MG260 family.

This is an uncharacterized protein from Mycoplasma pneumoniae (strain ATCC 29342 / M129 / Subtype 1) (Mycoplasmoides pneumoniae).